A 251-amino-acid polypeptide reads, in one-letter code: PF03932 family protein CutC (251 aa).

It belongs to the CutC family.

The protein resides in the cytoplasm. This chain is PF03932 family protein CutC, found in Bacteroides fragilis (strain ATCC 25285 / DSM 2151 / CCUG 4856 / JCM 11019 / LMG 10263 / NCTC 9343 / Onslow / VPI 2553 / EN-2).